The chain runs to 317 residues: MVVSLKGRDLLCLQDYTPEEIWTILETAKMLKIWQKIGKPHRLLEGKTLAMIFQKPSTRTRVSFEVAMAHLGGHALYLNAQDLQLRRGETIADTARVLSRYVDAIMARVYDHKDVEDLAKYASVPVINGLSDFSHPCQALADYMTIWEKKGTIKGVKVVYVGDGNNVAHSLMIAGTKLGADVVVATPEGYEPDEKVIKWAEQNAAESGGSFELLHDPVKAVKDADVIYTDVWASMGQEAEAEERRKIFRPFQVNKDLVKHAKPDYMFMHCLPAHRGEEVTDDVIDSPNSVVWDEAENRLHAQKAVLALLLGGVKTGF.

Residues 57-60 (STRT), Q84, R108, and 135-138 (HPCQ) each bind carbamoyl phosphate. Residues N166, D230, and 234 to 235 (SM) each bind L-ornithine. Carbamoyl phosphate is bound by residues 270–271 (CL) and R298.

Belongs to the aspartate/ornithine carbamoyltransferase superfamily. OTCase family. Homododecamer.

Its subcellular location is the cytoplasm. The enzyme catalyses carbamoyl phosphate + L-ornithine = L-citrulline + phosphate + H(+). Its pathway is amino-acid biosynthesis; L-arginine biosynthesis; L-arginine from L-ornithine and carbamoyl phosphate: step 1/3. In terms of biological role, reversibly catalyzes the transfer of the carbamoyl group from carbamoyl phosphate (CP) to the N(epsilon) atom of ornithine (ORN) to produce L-citrulline. This chain is Ornithine carbamoyltransferase, found in Pyrococcus abyssi (strain GE5 / Orsay).